The chain runs to 310 residues: Adenylyl-sulfate kinase 4, chloroplastic (310 aa).

The transit peptide at 1-75 (MDVAAMARCV…MAKDESISSR (75 aa)) directs the protein to the chloroplast. Residue 116–124 (GLSGSGKSS) participates in ATP binding. Residues aspartate 146, arginine 149, arginine 163, asparagine 166, 189–190 (IS), and glycine 239 each bind substrate. Residue serine 190 is the Phosphoserine intermediate of the active site.

The protein belongs to the APS kinase family. As to quaternary structure, homodimer; disulfide-linked. Expressed in root vasculature, root tips, leaf epidermal and guard cells, pollen grains and radicle of immature seeds.

It localises to the plastid. The protein resides in the chloroplast. The catalysed reaction is adenosine 5'-phosphosulfate + ATP = 3'-phosphoadenylyl sulfate + ADP + H(+). It participates in sulfur metabolism; hydrogen sulfide biosynthesis; sulfite from sulfate: step 2/3. Catalyzes the phosphorylation of adenosine 5'-phosphosulfate to 3'-phosphoadenylyl sulfate, which is the activated sulfate form for sulfation reactions. Essential for plant reproduction and viability. The sequence is that of Adenylyl-sulfate kinase 4, chloroplastic (APK4) from Arabidopsis thaliana (Mouse-ear cress).